Here is a 780-residue protein sequence, read N- to C-terminus: MDMIRPFGTLRMTDVEIVGGKNASIGEMIQGLAQADVRVPGGFATTADAFRLFLRENQIEEKINAKLQALDVNDVNALVAAGKEIRGWVEEARLPAALEDAIRQAYGEMGDDPDVAVRSSATAEDLPEASFAGQQETFLNVRGIEEVLNHVKLVFASLYNDRAISYRVHHNFEHSEVALSAGVQRMVRTDLGVSGVAFTLDTESGFRDAVFVTSSYGLGEMVVQGAVNPDEFFVYKPALEQGKKAVLRRTRGSKQKKMIYAEAGGVKTVDVDEAEQRAFSLSDDDLTELARQCVTIEKHYGRPMDIEWGKDGRDVQIYILQARPETVQSRAGRTLERFELTGKGDVLVEGRAVGSRIGAGVVRVVKSLDQMDSVQDGDILVADMTDPDWEPVMKRASAIVTNRGGRTCHAAIIARELGIPAVVGTGNATRELHNGDEVTVSCAEGDTGYVYAGRLDFHVNRVELDAMPEVGMKIMMNVASPDRAFSFAALPNEGVGLARVEFIISNVIGIHPRALLDYPDVPADVKAQIEEKTAGYASPRDFFREKLAEGVASIAAAFAPKPVIVRLSDFKSNEYHHLIGGPAYEPTEENPMIGFRGASRYRSADFAEAFALECQAMKQVRDDMGLTNVQLMIPFVRTVAEGQRILEILAANGLTQRENDLKVIMMCEVPSNALLADQFLDLFDGFSIGSNDLTQLTLALDRDSGLVADMFDEQNEAVLALMGMAIKAAKAKGKYVGICGQGPSDHPALAQWLMDQGIDSVSLNPDSVLSTWLHLAGEQA.

The Tele-phosphohistidine intermediate role is filled by histidine 409. Positions 499, 566, 668, 689, 690, 691, and 692 each coordinate substrate. Glutamate 668 lines the Mg(2+) pocket. A Mg(2+)-binding site is contributed by aspartate 692.

This sequence belongs to the PEP-utilizing enzyme family. Mg(2+) serves as cofactor.

The catalysed reaction is pyruvate + ATP + H2O = phosphoenolpyruvate + AMP + phosphate + 2 H(+). The protein operates within carbohydrate biosynthesis; gluconeogenesis. In terms of biological role, catalyzes the phosphorylation of pyruvate to phosphoenolpyruvate. This chain is Phosphoenolpyruvate synthase (ppsA), found in Deinococcus radiodurans (strain ATCC 13939 / DSM 20539 / JCM 16871 / CCUG 27074 / LMG 4051 / NBRC 15346 / NCIMB 9279 / VKM B-1422 / R1).